Here is a 327-residue protein sequence, read N- to C-terminus: BTB/POZ domain-containing protein KCTD12 (327 aa).

Residues 1–28 (MALADSARGLPNGGGGGGGSGSSSSSAE) form a disordered region. A2 bears the N-acetylalanine mark. Residues 11–21 (PNGGGGGGGSG) are compositionally biased toward gly residues. The residue at position 119 (Y119) is a Phosphotyrosine. Positions 129–204 (LGAPQQPGPG…PLLTPSQSLD (76 aa)) are disordered. 3 positions are modified to phosphoserine: S153, S173, and S187. Position 198 is a phosphothreonine (T198). S202 is modified (phosphoserine).

Interacts as a tetramer with GABBR1 and GABBR2. As to expression, expressed in the brain, mainly in the hippocampus and cerebellum.

It localises to the presynaptic cell membrane. The protein resides in the postsynaptic cell membrane. Its function is as follows. Auxiliary subunit of GABA-B receptors that determine the pharmacology and kinetics of the receptor response. Increases agonist potency and markedly alter the G-protein signaling of the receptors by accelerating onset and promoting desensitization. The protein is BTB/POZ domain-containing protein KCTD12 (Kctd12) of Mus musculus (Mouse).